A 337-amino-acid chain; its full sequence is Vacuolar protein sorting-associated protein 26B-A (337 aa).

A disordered region spans residues 313–337; that stretch reads RFEGTSHPETRPQHSGAAAVEQEHE.

This sequence belongs to the VPS26 family. Component of the heterotrimeric retromer cargo-selective complex (CSC) which is believed to associate with variable sorting nexins to form functionally distinct retromer complex variants.

Its subcellular location is the cytoplasm. It localises to the endosome membrane. The protein localises to the early endosome. In terms of biological role, acts as a component of the retromer cargo-selective complex (CSC). The CSC is believed to be the core functional component of retromer or respective retromer complex variants acting to prevent missorting of selected transmembrane cargo proteins into the lysosomal degradation pathway. Retromer mediates retrograde transport of cargo proteins from endosomes to the trans-Golgi network (TGN). The protein is Vacuolar protein sorting-associated protein 26B-A (vps26b-a) of Xenopus laevis (African clawed frog).